Reading from the N-terminus, the 187-residue chain is Ribose 1,5-bisphosphate phosphokinase PhnN (187 aa).

Residue 10-17 (GPSGSGKD) coordinates ATP.

It belongs to the ribose 1,5-bisphosphokinase family.

The enzyme catalyses alpha-D-ribose 1,5-bisphosphate + ATP = 5-phospho-alpha-D-ribose 1-diphosphate + ADP. It participates in metabolic intermediate biosynthesis; 5-phospho-alpha-D-ribose 1-diphosphate biosynthesis; 5-phospho-alpha-D-ribose 1-diphosphate from D-ribose 5-phosphate (route II): step 3/3. In terms of biological role, catalyzes the phosphorylation of ribose 1,5-bisphosphate to 5-phospho-D-ribosyl alpha-1-diphosphate (PRPP). In Klebsiella pneumoniae subsp. pneumoniae (strain ATCC 700721 / MGH 78578), this protein is Ribose 1,5-bisphosphate phosphokinase PhnN.